The primary structure comprises 614 residues: MAFQDFDKIQERVNANRKRKFRKRIIVGTVSLLVVVAAIVGGAFAYVAYEKRNEQQQQQQQAKNHNKSGSGNNVVKDSDKKSPSPPTPSQKAPVSAAQSVKPGQGDKIIQTLCSSTLYMQICEKTLKNRTDKGFALDNPTTFLKSAIEAVNEDLDLVLEKVLSLKTENQDDKDAIEQCKLLVEDAKEETVASLNKINVTEVNSFEKVVPDLESWLSAVMSYQETCLDGFEEGNLKSEVKTSVNSSQVLTSNSLALIKTFTENLSPVMKVVERHLLDDIPSWVSNDDRRMLRAVDVKALKPNATVAKDGSGDFTTINDALRAMPEKYEGRYIIYVKQGIYDEYVTVDKKKANLTMVGDGSQKTIVTGNKSHAKKIRTFLTATFVAQGEGFMAQSMGFRNTAGPEGHQAVAIRVQSDRSIFLNCRFEGYQDTLYAYTHRQYYRSCVIVGTIDFIFGDAAAIFQNCNIFIRKGLPGQKNTVTAQGRVDKFQTTGFVVHNCKIAANEDLKPVKEEYKSYLGRPWKNYSRTIIMESKIENVIDPVGWLRWQETDFAIDTLYYAEYNNKGSSGDTTSRVKWPGFKVINKEEALNYTVGPFLQGDWISASGSPVKLGLYDA.

The helical transmembrane segment at isoleucine 25–alanine 45 threads the bilayer. A disordered region spans residues glutamine 55–proline 102. Asparagine 66, asparagine 128, asparagine 197, asparagine 243, asparagine 301, asparagine 351, and asparagine 367 each carry an N-linked (GlcNAc...) asparagine glycan. Residues glycine 103–leucine 255 are pectinesterase inhibitor 13. Residues asparagine 301 to aspartate 598 form a pectinesterase 13 region. Substrate is bound by residues threonine 376 and glutamine 406. Aspartate 429 functions as the Proton donor; for pectinesterase activity in the catalytic mechanism. Residues cysteine 443 and cysteine 463 are joined by a disulfide bond. Aspartate 450 serves as the catalytic Nucleophile; for pectinesterase activity. Arginine 518 and tryptophan 520 together coordinate substrate. 2 N-linked (GlcNAc...) asparagine glycosylation sites follow: asparagine 522 and asparagine 588.

It in the N-terminal section; belongs to the PMEI family. The protein in the C-terminal section; belongs to the pectinesterase family. Expressed in flower buds.

Its subcellular location is the membrane. It catalyses the reaction [(1-&gt;4)-alpha-D-galacturonosyl methyl ester](n) + n H2O = [(1-&gt;4)-alpha-D-galacturonosyl](n) + n methanol + n H(+). It functions in the pathway glycan metabolism; pectin degradation; 2-dehydro-3-deoxy-D-gluconate from pectin: step 1/5. Its function is as follows. Acts in the modification of cell walls via demethylesterification of cell wall pectin. This Arabidopsis thaliana (Mouse-ear cress) protein is Probable pectinesterase/pectinesterase inhibitor 13 (PME13).